The chain runs to 249 residues: MRILISNDDGATAPGLAALYAALEDYAECVVVAPDQDKSGASSSLTLDRPLHPKVLANGFISVNGTPTDCVHLAINSLLDHEPDLVVSGINLGANLGDDVLYSGTVAAALEGRFLGRTAFAFSFASRQLDNLPTAAYFARKLVEAHATLDLPPRTVLNVNIPNLPLDHIRGIQLTRLGHRARAAAPLKVVDPRGKEGYWIAAAGDAEDGGEGTDFHAVMQGYVSITPLQFDRTFSDAFSGLDGWLEGLR.

Residues Asp8, Asp9, Ser39, and Asn91 each contribute to the a divalent metal cation site.

This sequence belongs to the SurE nucleotidase family. A divalent metal cation serves as cofactor.

It localises to the cytoplasm. The enzyme catalyses a ribonucleoside 5'-phosphate + H2O = a ribonucleoside + phosphate. In terms of biological role, nucleotidase that shows phosphatase activity on nucleoside 5'-monophosphates. The sequence is that of 5'-nucleotidase SurE from Pseudomonas fluorescens (strain SBW25).